Here is a 143-residue protein sequence, read N- to C-terminus: Mannitol-specific phosphotransferase enzyme IIA component (143 aa).

The PTS EIIA type-2 domain maps to 2 to 142; it reads QVLAKENIKL…EDLIAIFNEV (141 aa). Histidine 62 acts as the Tele-phosphohistidine intermediate in catalysis. Residue histidine 62 is modified to Phosphohistidine; by HPr. Position 74 is a phosphoserine (serine 74).

It is found in the cytoplasm. Functionally, the phosphoenolpyruvate-dependent sugar phosphotransferase system (sugar PTS), a major carbohydrate active transport system, catalyzes the phosphorylation of incoming sugar substrates concomitantly with their translocation across the cell membrane. The enzyme II CmtAB PTS system is involved in D-mannitol transport. The polypeptide is Mannitol-specific phosphotransferase enzyme IIA component (mtlF) (Bacillus subtilis (strain 168)).